The following is a 421-amino-acid chain: Zinc metalloproteinase-disintegrin-like crotastatin (421 aa).

The Peptidase M12B domain occupies 10 to 206 (KYVKLFLVAD…NMPQCILKKP (197 aa)). N-linked (GlcNAc...) asparagine glycosylation is present at Asn-29. Intrachain disulfides connect Cys-121/Cys-201, Cys-161/Cys-185, and Cys-163/Cys-168. His-146 is a binding site for Zn(2+). Glu-147 is a catalytic residue. The Zn(2+) site is built by His-150 and His-156. Positions 214–299 (PAVCGNYFVE…TECTDRFQRN (86 aa)) constitute a Disintegrin domain. Ca(2+) is bound by residues Val-216, Asn-219, Phe-221, Glu-223, Glu-226, and Asp-229. 14 disulfide bridges follow: Cys-217–Cys-246, Cys-228–Cys-241, Cys-230–Cys-236, Cys-240–Cys-263, Cys-254–Cys-260, Cys-259–Cys-285, Cys-272–Cys-292, Cys-279–Cys-310, Cys-303–Cys-315, Cys-322–Cys-372, Cys-337–Cys-383, Cys-350–Cys-360, Cys-367–Cys-409, and Cys-403–Cys-414. A D/ECD-tripeptide motif is present at residues 278–280 (ECD). The Ca(2+) site is built by Asp-280, Met-281, Asp-283, Asp-294, and Arg-295.

This sequence belongs to the venom metalloproteinase (M12B) family. P-III subfamily. P-IIIc sub-subfamily. As to quaternary structure, homodimer; disulfide-linked. Zn(2+) serves as cofactor. In terms of tissue distribution, expressed by the venom gland.

The protein localises to the secreted. Functionally, snake venom zinc metalloprotease that induces apoptosis in vascular endothelial cells (VEC), without degrading the extracellular matrix (it cannot cleave collagen) or inhibiting adhesion of VEC. Has also fibrinogenolytic and hemorrhagic activities. This Crotalus durissus terrificus (South American rattlesnake) protein is Zinc metalloproteinase-disintegrin-like crotastatin.